We begin with the raw amino-acid sequence, 222 residues long: Leucyl/phenylalanyl-tRNA--protein transferase (222 aa).

Belongs to the L/F-transferase family.

Its subcellular location is the cytoplasm. It carries out the reaction N-terminal L-lysyl-[protein] + L-leucyl-tRNA(Leu) = N-terminal L-leucyl-L-lysyl-[protein] + tRNA(Leu) + H(+). It catalyses the reaction N-terminal L-arginyl-[protein] + L-leucyl-tRNA(Leu) = N-terminal L-leucyl-L-arginyl-[protein] + tRNA(Leu) + H(+). The enzyme catalyses L-phenylalanyl-tRNA(Phe) + an N-terminal L-alpha-aminoacyl-[protein] = an N-terminal L-phenylalanyl-L-alpha-aminoacyl-[protein] + tRNA(Phe). Its function is as follows. Functions in the N-end rule pathway of protein degradation where it conjugates Leu, Phe and, less efficiently, Met from aminoacyl-tRNAs to the N-termini of proteins containing an N-terminal arginine or lysine. This is Leucyl/phenylalanyl-tRNA--protein transferase from Legionella pneumophila (strain Lens).